A 427-amino-acid chain; its full sequence is Acyl-lipid 8-desaturase (427 aa).

The interval 1-24 (MGRGGDSSGQAHPAAELAVPSDRA) is disordered. Residues 36–84 (IVLYGKRVDVTKFQRTHPGGSKVFRIFQDRDATEQFESYHSKRAIKMME) form the Cytochrome b5 heme-binding domain. Residues histidine 52 and histidine 75 each contribute to the heme site. Residues 178-182 (HSVFK) carry the Histidine box-1 motif. Residues 189 to 209 (VGWNNAAGYFLGFVQGYAVEW) traverse the membrane as a helical segment. Positions 213–218 (RHNTHH) match the Histidine box-2 motif. The next 2 helical transmembrane spans lie at 261 to 281 (VPVM…YVAM) and 286 to 306 (MLPQ…VFAG). The short motif at 373 to 377 (QTEHH) is the Histidine box-3 element.

The protein belongs to the fatty acid desaturase type 1 family. Fe(2+) is required as a cofactor.

The protein localises to the membrane. Functionally, fatty acid desaturase that introduces a cis double bond at the 8-position in 20-carbon polyunsaturated fatty acids incorporated in a glycerolipid that contain a Delta(8) double bond to yield (20:4(8,11,14,17)). This chain is Acyl-lipid 8-desaturase, found in Rebecca salina (Marine microalga).